Consider the following 112-residue polypeptide: Prothymosin alpha (112 aa).

An N-acetylmethionine modification is found at M1. The interval 1–112 is disordered; it reads MSDAAVDTSS…KKQKKTDEDD (112 aa). S2 carries the N-acetylserine; in Prothymosin alpha, N-terminally processed modification. A Phosphoserine modification is found at S2. T8 carries the post-translational modification Phosphothreonine. Phosphoserine is present on residues S9 and S10. 2 positions are modified to phosphothreonine: T13 and T14. The span at 13–31 shows a compositional bias: basic and acidic residues; sequence TTKDLKEKKEVVEEAENGR. K15 carries the post-translational modification N6-acetyllysine; alternate. K15 carries the N6-succinyllysine; alternate modification. A compositionally biased stretch (acidic residues) spans 43 to 84; it reads ENGEQEADNEVDEEEEEGGEEEEEEEEGDGEEEDGDEDEEAE. Residues 101–112 are compositionally biased toward basic and acidic residues; sequence ETKKQKKTDEDD. T102 is modified (phosphothreonine). N6-acetyllysine; alternate is present on K103. K103 is covalently cross-linked (Glycyl lysine isopeptide (Lys-Gly) (interchain with G-Cter in SUMO2); alternate). Phosphothreonine is present on T108.

It belongs to the pro/parathymosin family. As to quaternary structure, interacts with NUPR1; regulates apoptotic process. Post-translationally, covalently linked to a small RNA of about 20 nucleotides.

The protein localises to the nucleus. Prothymosin alpha may mediate immune function by conferring resistance to certain opportunistic infections. The chain is Prothymosin alpha (Ptma) from Rattus norvegicus (Rat).